A 196-amino-acid polypeptide reads, in one-letter code: UPF0340 protein TTHA0583 (196 aa).

It belongs to the UPF0340 family.

This chain is UPF0340 protein TTHA0583, found in Thermus thermophilus (strain ATCC 27634 / DSM 579 / HB8).